The chain runs to 428 residues: Trigger factor (428 aa).

Residues 163 to 248 (GDIVDIDFEG…VNDVKVKELP (86 aa)) form the PPIase FKBP-type domain.

It belongs to the FKBP-type PPIase family. Tig subfamily.

The protein resides in the cytoplasm. The catalysed reaction is [protein]-peptidylproline (omega=180) = [protein]-peptidylproline (omega=0). Functionally, involved in protein export. Acts as a chaperone by maintaining the newly synthesized protein in an open conformation. Functions as a peptidyl-prolyl cis-trans isomerase. The sequence is that of Trigger factor from Acetivibrio thermocellus (strain ATCC 27405 / DSM 1237 / JCM 9322 / NBRC 103400 / NCIMB 10682 / NRRL B-4536 / VPI 7372) (Clostridium thermocellum).